A 241-amino-acid polypeptide reads, in one-letter code: Putative inactive serine protease 58 (241 aa).

The signal sequence occupies residues 1-17; sequence MKLAFLCILSTLLRTFA. The region spanning 18 to 239 is the Peptidase S1 domain; the sequence is YNPDHIAGTT…YLPWIEDTMK (222 aa). Cys-41 and Cys-57 are joined by a disulfide. Residues His-56 and Asp-101 each act as charge relay system in the active site. Disulfide bonds link Cys-133/Cys-201, Cys-165/Cys-180, and Cys-191/Cys-215. Residue Asn-156 is glycosylated (N-linked (GlcNAc...) asparagine).

It belongs to the peptidase S1 family.

It localises to the secreted. It carries out the reaction Preferential cleavage: Arg-|-Xaa, Lys-|-Xaa.. This is Putative inactive serine protease 58 (Prss58) from Mus musculus (Mouse).